The following is a 515-amino-acid chain: Probable cytosol aminopeptidase (515 aa).

Mn(2+)-binding residues include Lys274 and Asp279. Residue Lys286 is part of the active site. Mn(2+)-binding residues include Asp297, Asp356, and Glu358. The active site involves Arg360.

This sequence belongs to the peptidase M17 family. Mn(2+) serves as cofactor.

It is found in the cytoplasm. The catalysed reaction is Release of an N-terminal amino acid, Xaa-|-Yaa-, in which Xaa is preferably Leu, but may be other amino acids including Pro although not Arg or Lys, and Yaa may be Pro. Amino acid amides and methyl esters are also readily hydrolyzed, but rates on arylamides are exceedingly low.. It carries out the reaction Release of an N-terminal amino acid, preferentially leucine, but not glutamic or aspartic acids.. Presumably involved in the processing and regular turnover of intracellular proteins. Catalyzes the removal of unsubstituted N-terminal amino acids from various peptides. The sequence is that of Probable cytosol aminopeptidase from Desulforapulum autotrophicum (strain ATCC 43914 / DSM 3382 / VKM B-1955 / HRM2) (Desulfobacterium autotrophicum).